A 364-amino-acid chain; its full sequence is Probable dual-specificity RNA methyltransferase RlmN (364 aa).

Glu107 serves as the catalytic Proton acceptor. One can recognise a Radical SAM core domain in the interval 113–346 (HEYGNSVCVT…ATIRREQGSD (234 aa)). Cys120 and Cys351 are oxidised to a cystine. Positions 127, 131, and 134 each coordinate [4Fe-4S] cluster. S-adenosyl-L-methionine contacts are provided by residues 177 to 178 (GE), Ser209, 232 to 234 (SLH), and Asn308. Cys351 acts as the S-methylcysteine intermediate in catalysis.

It belongs to the radical SAM superfamily. RlmN family. [4Fe-4S] cluster is required as a cofactor.

It localises to the cytoplasm. The enzyme catalyses adenosine(2503) in 23S rRNA + 2 reduced [2Fe-2S]-[ferredoxin] + 2 S-adenosyl-L-methionine = 2-methyladenosine(2503) in 23S rRNA + 5'-deoxyadenosine + L-methionine + 2 oxidized [2Fe-2S]-[ferredoxin] + S-adenosyl-L-homocysteine. The catalysed reaction is adenosine(37) in tRNA + 2 reduced [2Fe-2S]-[ferredoxin] + 2 S-adenosyl-L-methionine = 2-methyladenosine(37) in tRNA + 5'-deoxyadenosine + L-methionine + 2 oxidized [2Fe-2S]-[ferredoxin] + S-adenosyl-L-homocysteine. Its function is as follows. Specifically methylates position 2 of adenine 2503 in 23S rRNA and position 2 of adenine 37 in tRNAs. Confers resistance to some classes of antibiotics. This is Probable dual-specificity RNA methyltransferase RlmN from Staphylococcus epidermidis (strain ATCC 12228 / FDA PCI 1200).